We begin with the raw amino-acid sequence, 464 residues long: Alpha-2A adrenergic receptor (464 aa).

Residues 1–47 (MFRQEQRWPRQLWPMGSLQPDSGNASWNGTEGPGGGTRATPYSLQVT) are Extracellular-facing. The interval 13–34 (WPMGSLQPDSGNASWNGTEGPG) is disordered. Positions 19 to 29 (QPDSGNASWNG) are enriched in polar residues. N-linked (GlcNAc...) asparagine glycosylation is found at Asn24 and Asn28. Residues 48–73 (VTLVCLVGLLILLTVFGNVLVIIAVF) form a helical membrane-spanning segment. Over 74–84 (TSRALKAPQNL) the chain is Cytoplasmic. Residues 85–110 (FLVSLASADILVATLVIPFSLANEVM) form a helical membrane-spanning segment. The Extracellular segment spans residues 111–120 (GYWYFGKAWC). A disulfide bridge connects residues Cys120 and Cys201. The chain crosses the membrane as a helical span at residues 121–143 (EIYLALDVLFCTSSIVHLCAISL). Over 144–163 (DRYWSITQAIEYNLKRTPRR) the chain is Cytoplasmic. A helical membrane pass occupies residues 164–187 (IKAIIVTVWVISAVISFPPLISFE). Topologically, residues 188–206 (KAGGGGQQPAEPRCEINDQ) are extracellular. A helical transmembrane segment spans residues 207–231 (KWYVISSSIGSFFAPCLIMILVYVR). Topologically, residues 232-388 (IYQIAKRRTR…RQNREKRFTF (157 aa)) are cytoplasmic. Positions 240-378 (TRVPPSRRGP…GGAKASRWRG (139 aa)) are disordered. A compositionally biased stretch (low complexity) spans 251-268 (AHAAAPPGGAERRPNGLG). Basic and acidic residues predominate over residues 312–329 (SSEHAERPPGARRPERGL). Ser345 bears the Phosphoserine mark. The span at 354-363 (AGSGTSGSGP) shows a compositional bias: gly residues. Arg367 carries the post-translational modification Omega-N-methylarginine. Residues 389 to 413 (VLAVVIGVFVVCWFPFFFTYTLTAV) form a helical membrane-spanning segment. Residues 414 to 423 (GCSVPRTLFK) are Extracellular-facing. Residues 424 to 444 (FFFWFGYCNSSLNPVIYTIFN) form a helical membrane-spanning segment. The Cytoplasmic segment spans residues 445–464 (HDFRRAFKKILCRGDRKRIV). Cys456 is lipidated: S-palmitoyl cysteine.

The protein belongs to the G-protein coupled receptor 1 family. Adrenergic receptor subfamily. ADRA2A sub-subfamily. In terms of assembly, component of the ADA2A-containing complex (ATAC), composed of KAT14, KAT2A, TADA2L, TADA3L, ZZ3, MBIP, WDR5, YEATS2, CCDC101 and DR1.

The protein resides in the cell membrane. Its function is as follows. Alpha-2 adrenergic receptors mediate the catecholamine-induced inhibition of adenylate cyclase through the action of G proteins. Component of the ATAC complex, a complex with histone acetyltransferase activity on histones H3 and H4. This is Alpha-2A adrenergic receptor from Cavia porcellus (Guinea pig).